Here is a 241-residue protein sequence, read N- to C-terminus: MNMGGSSSTAAKKATCKISMLWNWYTIDTCFIARSWRNDTKGKFAGSCIGCFALVVVAQWLTRFSRQFDVELLKRQKIKHLASYSPEEYVVKCGEEDAKSDIEELQGFYNEPSWKTTLISLQKSFIYSFYVWGPRRLNEPEDDLLKKVLSCCTLITPVDLYPTFLDHMIRVTIFVLQWGLSYIIMLLFMYYNGYIIISCLIGAIVGRFIFCYEPLGSLGANGSAQGTVSYDKESDDRKCCL.

The Lumenal portion of the chain corresponds to 1-41 (MNMGGSSSTAAKKATCKISMLWNWYTIDTCFIARSWRNDTK). A helical transmembrane segment spans residues 42–62 (GKFAGSCIGCFALVVVAQWLT). Topologically, residues 63 to 159 (RFSRQFDVEL…SCCTLITPVD (97 aa)) are cytoplasmic. A helical transmembrane segment spans residues 160 to 180 (LYPTFLDHMIRVTIFVLQWGL). Topologically, residues 181–182 (SY) are lumenal. Residues 183–203 (IIMLLFMYYNGYIIISCLIGA) form a helical membrane-spanning segment. The Cytoplasmic portion of the chain corresponds to 204–241 (IVGRFIFCYEPLGSLGANGSAQGTVSYDKESDDRKCCL).

It belongs to the copper transporter (Ctr) (TC 1.A.56) family. SLC31A subfamily.

Its subcellular location is the cytoplasmic vesicle membrane. Required for high affinity copper (probably reduced Cu I) transport into the cell. This chain is Copper transport protein CTR3 (CTR3), found in Saccharomyces cerevisiae (strain ATCC 204508 / S288c) (Baker's yeast).